An 85-amino-acid chain; its full sequence is NAD(P)H-quinone oxidoreductase subunit O (85 aa).

It belongs to the complex I NdhO subunit family. In terms of assembly, NDH-1 can be composed of about 15 different subunits; different subcomplexes with different compositions have been identified which probably have different functions.

Its subcellular location is the cellular thylakoid membrane. The enzyme catalyses a plastoquinone + NADH + (n+1) H(+)(in) = a plastoquinol + NAD(+) + n H(+)(out). It catalyses the reaction a plastoquinone + NADPH + (n+1) H(+)(in) = a plastoquinol + NADP(+) + n H(+)(out). In terms of biological role, NDH-1 shuttles electrons from an unknown electron donor, via FMN and iron-sulfur (Fe-S) centers, to quinones in the respiratory and/or the photosynthetic chain. The immediate electron acceptor for the enzyme in this species is believed to be plastoquinone. Couples the redox reaction to proton translocation, and thus conserves the redox energy in a proton gradient. Cyanobacterial NDH-1 also plays a role in inorganic carbon-concentration. The protein is NAD(P)H-quinone oxidoreductase subunit O of Synechococcus sp. (strain CC9311).